The chain runs to 152 residues: Small ribosomal subunit protein uS11 (152 aa).

The disordered stretch occupies residues 133 to 152 (VTPIPTDSTRRKSGHRGRRL). The span at 143–152 (RKSGHRGRRL) shows a compositional bias: basic residues.

This sequence belongs to the universal ribosomal protein uS11 family. As to quaternary structure, component of the small ribosomal subunit. Part of the small subunit (SSU) processome, composed of more than 70 proteins and the RNA chaperone small nucleolar RNA (snoRNA) U3.

The protein resides in the cytoplasm. It is found in the nucleus. The protein localises to the nucleolus. Its function is as follows. Component of the small ribosomal subunit. The ribosome is a large ribonucleoprotein complex responsible for the synthesis of proteins in the cell. Part of the small subunit (SSU) processome, first precursor of the small eukaryotic ribosomal subunit. During the assembly of the SSU processome in the nucleolus, many ribosome biogenesis factors, an RNA chaperone and ribosomal proteins associate with the nascent pre-rRNA and work in concert to generate RNA folding, modifications, rearrangements and cleavage as well as targeted degradation of pre-ribosomal RNA by the RNA exosome. The protein is Small ribosomal subunit protein uS11 (rps14) of Dictyostelium discoideum (Social amoeba).